The primary structure comprises 345 residues: NADPH dehydrogenase (345 aa).

Ser-23–Cys-26 contacts FMN. Position 28 (Tyr-28) interacts with substrate. FMN-binding residues include Ala-60 and Gln-102. Substrate is bound at residue His-164–His-167. FMN contacts are provided by residues Arg-215 and Gly-307–Arg-308.

Belongs to the NADH:flavin oxidoreductase/NADH oxidase family. NamA subfamily. As to quaternary structure, homotetramer. The cofactor is FMN.

It catalyses the reaction A + NADPH + H(+) = AH2 + NADP(+). In terms of biological role, catalyzes the reduction of the double bond of an array of alpha,beta-unsaturated aldehydes and ketones. It also reduces the nitro group of nitroester and nitroaromatic compounds. It could have a role in detoxification processes. The sequence is that of NADPH dehydrogenase from Bacillus thuringiensis subsp. konkukian (strain 97-27).